The sequence spans 525 residues: GMP synthase [glutamine-hydrolyzing] (525 aa).

The 201-residue stretch at 7-207 (RILVIDFGSQ…ITCICRCKSS (201 aa)) folds into the Glutamine amidotransferase type-1 domain. Cys84 (nucleophile) is an active-site residue. Catalysis depends on residues His181 and Glu183. The GMPS ATP-PPase domain occupies 208–400 (WKIANIIDDI…LGIPYDIAYR (193 aa)). 235–241 (SGGIDSL) contacts ATP.

In terms of assembly, homodimer.

It catalyses the reaction XMP + L-glutamine + ATP + H2O = GMP + L-glutamate + AMP + diphosphate + 2 H(+). It functions in the pathway purine metabolism; GMP biosynthesis; GMP from XMP (L-Gln route): step 1/1. Catalyzes the synthesis of GMP from XMP. This chain is GMP synthase [glutamine-hydrolyzing], found in Blochmanniella pennsylvanica (strain BPEN).